Consider the following 149-residue polypeptide: Ribosome-binding factor A (149 aa).

Positions 116-125 are enriched in basic and acidic residues; it reads TLFEELHPNP. The interval 116 to 149 is disordered; that stretch reads TLFEELHPNPEEDDGDTDAETLLEDSESGIERET. The span at 126 to 143 shows a compositional bias: acidic residues; the sequence is EEDDGDTDAETLLEDSES.

Belongs to the RbfA family. As to quaternary structure, monomer. Binds 30S ribosomal subunits, but not 50S ribosomal subunits or 70S ribosomes.

The protein resides in the cytoplasm. In terms of biological role, one of several proteins that assist in the late maturation steps of the functional core of the 30S ribosomal subunit. Associates with free 30S ribosomal subunits (but not with 30S subunits that are part of 70S ribosomes or polysomes). Required for efficient processing of 16S rRNA. May interact with the 5'-terminal helix region of 16S rRNA. This chain is Ribosome-binding factor A, found in Leptospira biflexa serovar Patoc (strain Patoc 1 / Ames).